Consider the following 441-residue polypeptide: Protein SPMIP7 (441 aa).

Testis specific. Expressed at the spermatid stage.

Its function is as follows. Essential for normal spermatogenesis. This chain is Protein SPMIP7 (Spmip7), found in Mus musculus (Mouse).